Reading from the N-terminus, the 640-residue chain is MKIKVKLPDGKEKEYDRGITPAEIAKELGVKKAIGAVVNGELWDLKRPIENDCELRLVTLEDPEAPEFYRHTMAHILAQAVMRIYGKENVKLGIGPTIENGFYYDFDIKNGKLTEEDLPKIEQEMKKIIKENLPIERKEISKEEARKLFNNQPYKLELIEEIEGDRVTIYRQGEFVDLCRGPHLPSTGVVKHFKLLSVSGAYWRGSEKNPMLTRVYGTAFAKKEDLDNYLKFLEEAQRRDHRKLGPHLELFMLNTEYAPGMPFFLPKGVVVLNELMRFSRELHRERGYQEIFTPLIMNEQLWKISGHWDHYAENMYFIEKDEERYAVKPMNCPGHILVYKSRTVSYRDLPLRFFEFGRVHRYERSGVLHGLMRVRSFTQDDAHIFCTPDQIEEEILGVLDLINTIYGQFGFTYRVELSTMPEDHMGDEAIWEKATTALKNALERAGLSYKVNEGEGAFYGPKIDFHIRDSIGREWQCATIQLDFMMPEKFNVTYIGPDNKEHRAVMIHRAIYGSLERFFGILIEHFAGAFPTWLAPIQVAVIPISEKHNDGAEKIAKRISQEGFRVFFDNRRETLGYRIRQAQTQKIPYMIILGDKELESGKISVRTRTGKEIKDVDLEHFVETLRNEVLSRKLELLMEG.

The TGS domain occupies 1-59 (MKIKVKLPDGKEKEYDRGITPAEIAKELGVKKAIGAVVNGELWDLKRPIENDCELRLVT). The interval 240 to 531 (DHRKLGPHLE…LIEHFAGAFP (292 aa)) is catalytic. Cysteine 332, histidine 383, and histidine 508 together coordinate Zn(2+).

This sequence belongs to the class-II aminoacyl-tRNA synthetase family. Homodimer. Zn(2+) is required as a cofactor.

The protein localises to the cytoplasm. The catalysed reaction is tRNA(Thr) + L-threonine + ATP = L-threonyl-tRNA(Thr) + AMP + diphosphate + H(+). Functionally, catalyzes the attachment of threonine to tRNA(Thr) in a two-step reaction: L-threonine is first activated by ATP to form Thr-AMP and then transferred to the acceptor end of tRNA(Thr). Also edits incorrectly charged L-seryl-tRNA(Thr). The polypeptide is Threonine--tRNA ligase (Thermotoga petrophila (strain ATCC BAA-488 / DSM 13995 / JCM 10881 / RKU-1)).